Consider the following 148-residue polypeptide: Transcriptional regulator MraZ (148 aa).

SpoVT-AbrB domains lie at 5–53 (ETAI…AEKE) and 82–125 (SAVL…SEQA).

It belongs to the MraZ family. Forms oligomers.

It localises to the cytoplasm. The protein resides in the nucleoid. The sequence is that of Transcriptional regulator MraZ from Xanthomonas axonopodis pv. citri (strain 306).